The chain runs to 950 residues: Protocadherin alpha-9 (950 aa).

The N-terminal stretch at 1-29 is a signal peptide; it reads MLYSSRGDPEGQPLLLSLLILAMWVVGSG. 6 consecutive Cadherin domains span residues 30–133, 134–242, 243–350, 351–455, 456–565, and 588–678; these read QLHY…PPVF, PATQ…APVF, DRTL…APQL, TIKT…APAF, AQSE…APAL, and GVVV…APKS. Topologically, residues 30–697 are extracellular; it reads QLHYSVPEEA…GPEVTLVDVN (668 aa). 2 N-linked (GlcNAc...) asparagine glycosylation sites follow: Asn254 and Asn265. Residue Asn548 is glycosylated (N-linked (GlcNAc...) asparagine). Residues 698–718 form a helical membrane-spanning segment; sequence VYLIIAICAVSSLLVLTLLLY. Residues 719-950 are Cytoplasmic-facing; sequence TVLRCSAMPT…GNSTTDNSDQ (232 aa). Residues 734 to 737 form a PXXP 1 repeat; it reads PGKP. The segment at 734–894 is 5 X 4 AA repeats of P-X-X-P; it reads PGKPTLVCSS…PDKFIIPGSP (161 aa). Disordered regions lie at residues 770 to 808, 827 to 856, and 871 to 950; these read MAFS…DWRY, ILRA…EVSP, and YGPG…NSDQ. The span at 789 to 798 shows a compositional bias: polar residues; it reads PSASSDSTGK. 4 PXXP repeats span residues 799-802, 832-835, 873-876, and 891-894; these read PRQP, PGGP, PGNP, and PGSP. The segment covering 909-923 has biased composition (basic and acidic residues); the sequence is DKSDFITFGKKEETK.

Its subcellular location is the cell membrane. Functionally, potential calcium-dependent cell-adhesion protein. May be involved in the establishment and maintenance of specific neuronal connections in the brain. The polypeptide is Protocadherin alpha-9 (PCDHA9) (Homo sapiens (Human)).